The chain runs to 443 residues: Postreplication repair E3 ubiquitin-protein ligase rad18 (443 aa).

The RING-type zinc finger occupies 30-68 (CQVCKDFFDNPVITSCSHTFCSLCIRRCLSTEGKCPTCR). A disordered region spans residues 106 to 157 (GTDDSGDLAAEEPASKKRKIEPNAIVGTDGLPEEGIRTRSQSRGASRQPQAT). Over residues 143 to 157 (TRSQSRGASRQPQAT) the composition is skewed to polar residues. The UBZ4-type zinc finger occupies 175 to 202 (LVPCPVCGRRMKEEAVFRHLDSCTGTAE). Cys178, Cys181, His193, and Cys197 together coordinate Zn(2+). An SAP domain is found at 239-273 (LKDTVLRKKLKDLGIPNWGPRALLQRRHTEWLNLW). Composition is skewed to polar residues over residues 350–363 (IPNA…TPRS) and 431–443 (PISS…KTPH). Residues 350–443 (IPNASQANSD…SSASTHKTPH (94 aa)) form a disordered region.

This sequence belongs to the RAD18 family. In terms of assembly, interacts with E2 UBC2, forming a complex with ubiquitin ligase activity.

The protein localises to the nucleus. It carries out the reaction S-ubiquitinyl-[E2 ubiquitin-conjugating enzyme]-L-cysteine + [acceptor protein]-L-lysine = [E2 ubiquitin-conjugating enzyme]-L-cysteine + N(6)-ubiquitinyl-[acceptor protein]-L-lysine.. The protein operates within protein modification; protein ubiquitination. Its function is as follows. E3 RING-finger protein, member of the UBC2/RAD6 epistasis group. Associates to the E2 ubiquitin conjugating enzyme UBC2/RAD6 to form the UBC2-RAD18 ubiquitin ligase complex involved in postreplicative repair (PRR) of damaged DNA. This chain is Postreplication repair E3 ubiquitin-protein ligase rad18 (uvsH), found in Emericella nidulans (strain FGSC A4 / ATCC 38163 / CBS 112.46 / NRRL 194 / M139) (Aspergillus nidulans).